Here is a 325-residue protein sequence, read N- to C-terminus: Ferrochelatase (325 aa).

Residues His172 and Glu267 each contribute to the Fe cation site.

This sequence belongs to the ferrochelatase family.

The protein resides in the cytoplasm. The enzyme catalyses heme b + 2 H(+) = protoporphyrin IX + Fe(2+). It participates in porphyrin-containing compound metabolism; protoheme biosynthesis; protoheme from protoporphyrin-IX: step 1/1. Its function is as follows. Catalyzes the ferrous insertion into protoporphyrin IX. The polypeptide is Ferrochelatase (Acidobacterium capsulatum (strain ATCC 51196 / DSM 11244 / BCRC 80197 / JCM 7670 / NBRC 15755 / NCIMB 13165 / 161)).